The sequence spans 200 residues: Large ribosomal subunit protein uL4 (200 aa).

The segment at 43 to 70 is disordered; the sequence is RAQKTRAEVSGSGKKPWRQKGTGRARSG.

Belongs to the universal ribosomal protein uL4 family. In terms of assembly, part of the 50S ribosomal subunit.

Its function is as follows. One of the primary rRNA binding proteins, this protein initially binds near the 5'-end of the 23S rRNA. It is important during the early stages of 50S assembly. It makes multiple contacts with different domains of the 23S rRNA in the assembled 50S subunit and ribosome. Forms part of the polypeptide exit tunnel. The sequence is that of Large ribosomal subunit protein uL4 from Glaesserella parasuis serovar 5 (strain SH0165) (Haemophilus parasuis).